We begin with the raw amino-acid sequence, 239 residues long: Pre-mRNA-splicing factor isy1 (239 aa).

It belongs to the ISY1 family. As to quaternary structure, associated with the spliceosome.

The protein localises to the cytoplasm. Its subcellular location is the nucleus. Functionally, involved in pre-mRNA splicing. The chain is Pre-mRNA-splicing factor isy1 (msp-7) from Neurospora crassa (strain ATCC 24698 / 74-OR23-1A / CBS 708.71 / DSM 1257 / FGSC 987).